Reading from the N-terminus, the 163-residue chain is MTEQASNGAAQDGQNAQFSLQRIYVRDLSFEAPKAPEIFRQDWKPSVQLDLNTRQKALDGGDFYEVVLSLSVTVKTGEEVAFIAEVQQAGIFLIKGLDAEAMGHTLGAFCPSLLFPYAREALDNLVVRGSFPALMLAPVNFDVLYAQELARMQAEGQASGTVQ.

The protein belongs to the SecB family. In terms of assembly, homotetramer, a dimer of dimers. One homotetramer interacts with 1 SecA dimer.

It is found in the cytoplasm. Functionally, one of the proteins required for the normal export of preproteins out of the cell cytoplasm. It is a molecular chaperone that binds to a subset of precursor proteins, maintaining them in a translocation-competent state. It also specifically binds to its receptor SecA. The sequence is that of Protein-export protein SecB from Azotobacter vinelandii (strain DJ / ATCC BAA-1303).